The sequence spans 610 residues: UvrABC system protein C (610 aa).

A GIY-YIG domain is found at 12-91 (TSPGVYLYKN…IKQKKPRFNI (80 aa)). A UVR domain is found at 202–237 (SDLKQSLTARMNKAAEGMQFELAAKYRDLITTVEDL).

The protein belongs to the UvrC family. In terms of assembly, interacts with UvrB in an incision complex.

The protein localises to the cytoplasm. Functionally, the UvrABC repair system catalyzes the recognition and processing of DNA lesions. UvrC both incises the 5' and 3' sides of the lesion. The N-terminal half is responsible for the 3' incision and the C-terminal half is responsible for the 5' incision. The protein is UvrABC system protein C of Koribacter versatilis (strain Ellin345).